Here is a 401-residue protein sequence, read N- to C-terminus: Beta-lactamase (401 aa).

An N-terminal signal peptide occupies residues 1–39; that stretch reads MKLFTSTLTAKKSSTHKPLISLALSVLISTLLISETAQA. Ser102 serves as the catalytic Acyl-ester intermediate. The active-site Proton acceptor is Tyr188. A substrate-binding site is contributed by 353-355; the sequence is KTG.

Belongs to the class-C beta-lactamase family.

Its subcellular location is the secreted. The enzyme catalyses a beta-lactam + H2O = a substituted beta-amino acid. This protein is a serine beta-lactamase with a substrate specificity for cephalosporins. This is Beta-lactamase (ampC) from Psychrobacter immobilis.